The primary structure comprises 217 residues: Probable transaldolase (217 aa).

Lys-83 acts as the Schiff-base intermediate with substrate in catalysis.

It belongs to the transaldolase family. Type 3B subfamily.

Its subcellular location is the cytoplasm. The catalysed reaction is D-sedoheptulose 7-phosphate + D-glyceraldehyde 3-phosphate = D-erythrose 4-phosphate + beta-D-fructose 6-phosphate. It participates in carbohydrate degradation; pentose phosphate pathway; D-glyceraldehyde 3-phosphate and beta-D-fructose 6-phosphate from D-ribose 5-phosphate and D-xylulose 5-phosphate (non-oxidative stage): step 2/3. Transaldolase is important for the balance of metabolites in the pentose-phosphate pathway. The protein is Probable transaldolase of Coprothermobacter proteolyticus (strain ATCC 35245 / DSM 5265 / OCM 4 / BT).